The sequence spans 354 residues: GTPase Obg (354 aa).

The Obg domain maps to 1–159 (MKFVDEVKIH…RDLVLELKLL (159 aa)). The OBG-type G domain occupies 160-333 (ADVGIVGYPN…LLDAVGRALF (174 aa)). GTP contacts are provided by residues 166–173 (GYPNAGKS), 191–195 (FTTLT), 212–215 (DIPG), 283–286 (TKID), and 314–316 (SAV). Residues serine 173 and threonine 193 each contribute to the Mg(2+) site.

Belongs to the TRAFAC class OBG-HflX-like GTPase superfamily. OBG GTPase family. Monomer. Mg(2+) serves as cofactor.

Its subcellular location is the cytoplasm. Its function is as follows. An essential GTPase which binds GTP, GDP and possibly (p)ppGpp with moderate affinity, with high nucleotide exchange rates and a fairly low GTP hydrolysis rate. Plays a role in control of the cell cycle, stress response, ribosome biogenesis and in those bacteria that undergo differentiation, in morphogenesis control. This Anaeromyxobacter sp. (strain K) protein is GTPase Obg.